The sequence spans 326 residues: tRNA(Ile)-lysidine synthase (326 aa).

23–28 (SGGVDS) lines the ATP pocket.

This sequence belongs to the tRNA(Ile)-lysidine synthase family.

Its subcellular location is the cytoplasm. The catalysed reaction is cytidine(34) in tRNA(Ile2) + L-lysine + ATP = lysidine(34) in tRNA(Ile2) + AMP + diphosphate + H(+). Ligates lysine onto the cytidine present at position 34 of the AUA codon-specific tRNA(Ile) that contains the anticodon CAU, in an ATP-dependent manner. Cytidine is converted to lysidine, thus changing the amino acid specificity of the tRNA from methionine to isoleucine. The sequence is that of tRNA(Ile)-lysidine synthase from Wolinella succinogenes (strain ATCC 29543 / DSM 1740 / CCUG 13145 / JCM 31913 / LMG 7466 / NCTC 11488 / FDC 602W) (Vibrio succinogenes).